Here is a 91-residue protein sequence, read N- to C-terminus: Small ribosomal subunit protein uS19 (91 aa).

The protein belongs to the universal ribosomal protein uS19 family.

Its function is as follows. Protein S19 forms a complex with S13 that binds strongly to the 16S ribosomal RNA. In Synechococcus sp. (strain CC9605), this protein is Small ribosomal subunit protein uS19.